We begin with the raw amino-acid sequence, 379 residues long: Glutamate 5-kinase (379 aa).

Lysine 14 lines the ATP pocket. 3 residues coordinate substrate: serine 54, aspartate 141, and asparagine 153. ATP contacts are provided by residues 173-174 and 215-221; these read TD and TGGMATK. One can recognise a PUA domain in the interval 280 to 358; sequence KGRLLLDIGA…DEIEPLLGYD (79 aa).

Belongs to the glutamate 5-kinase family.

Its subcellular location is the cytoplasm. The enzyme catalyses L-glutamate + ATP = L-glutamyl 5-phosphate + ADP. The protein operates within amino-acid biosynthesis; L-proline biosynthesis; L-glutamate 5-semialdehyde from L-glutamate: step 1/2. Its function is as follows. Catalyzes the transfer of a phosphate group to glutamate to form L-glutamate 5-phosphate. This is Glutamate 5-kinase from Shewanella amazonensis (strain ATCC BAA-1098 / SB2B).